We begin with the raw amino-acid sequence, 268 residues long: Interleukin-1 alpha (268 aa).

Residues 1-112 (MAKVPDLFED…DTEEEIIKPR (112 aa)) constitute a propeptide that is removed on maturation. At Lys82 the chain carries N6-acetyllysine. Residues 82–86 (KKRRL) form a nuclear localization signal (NLS) region. Ser87 carries the post-translational modification Phosphoserine. N-linked (GlcNAc...) asparagine glycosylation is found at Asn102 and Asn141.

It belongs to the IL-1 family. As to quaternary structure, monomer. Interacts with TMED10; the interaction mediates the translocation from the cytoplasm into the ERGIC (endoplasmic reticulum-Golgi intermediate compartment) and thereby secretion. Interacts with IL1R1. Interacts with S100A13; this interaction is the first step in the export of IL1A, followed by direct translocation of this complex across the plasma membrane. Post-translationally, acetylated within its nuclear localization sequence, which impacts subcellular localization. Proteolytic processed by CAPN1 in a calcium-dependent manner. Cleavage from 31 kDa precursor to 18 kDa biologically active molecules. In terms of processing, phosphorylated. Phosphorylation greatly enhances susceptibility to digestion and promotes the conversion of pre-IL1A alpha to the biologically active IL1A.

It localises to the nucleus. It is found in the cytoplasm. The protein resides in the secreted. In terms of biological role, cytokine constitutively present intracellularly in nearly all resting non-hematopoietic cells that plays an important role in inflammation and bridges the innate and adaptive immune systems. After binding to its receptor IL1R1 together with its accessory protein IL1RAP, forms the high affinity interleukin-1 receptor complex. Signaling involves the recruitment of adapter molecules such as MYD88, IRAK1 or IRAK4. In turn, mediates the activation of NF-kappa-B and the three MAPK pathways p38, p42/p44 and JNK pathways. Within the cell, acts as an alarmin and cell death results in its liberation in the extracellular space after disruption of the cell membrane to induce inflammation and alert the host to injury or damage. In addition to its role as a danger signal, which occurs when the cytokine is passively released by cell necrosis, directly senses DNA damage and acts as signal for genotoxic stress without loss of cell integrity. The protein is Interleukin-1 alpha (IL1A) of Lama glama (Llama).